Here is a 1228-residue protein sequence, read N- to C-terminus: Myosin-1 (1228 aa).

Positions 1–27 (MAVTKRAGRRAQGGTQPAKGAQGVKKA) are disordered. A Myosin motor domain is found at 37–716 (VGVSDLTLLS…TLFALEHMRD (680 aa)). 130 to 137 (GESGAGKT) is an ATP binding site. The residue at position 358 (Ser358) is a Phosphoserine. An actin-binding region spans residues 405-487 (TIGILDIYGF…PGIFAALNDA (83 aa)). IQ domains lie at 720–740 (HNMAARIQRAWRRYLAYKTEC) and 741–768 (AIKIQRFWRLKRGLDGLKEIQFRDSGHK). The TH1 domain maps to 776–962 (RRTYSLIGYR…SGSVQVPPGA (187 aa)). Disordered stretches follow at residues 953–1040 (SGSV…AESA), 1053–1109 (QSLV…PAAP), and 1169–1228 (QGGA…DDDW). Over residues 1053 to 1063 (QSLVNPRSGQG) the composition is skewed to polar residues. The span at 1064 to 1092 (QQQQQHHQAYQQPTAAQPAATSYSPAPAK) shows a compositional bias: low complexity. The segment covering 1093 to 1106 (AAPPPPPPAPPAAP) has biased composition (pro residues). The region spanning 1109 to 1170 (PAEPTYKALY…PAAYLEEVQG (62 aa)) is the SH3 domain. Residues 1180 to 1194 (PTAGGASAGASLAEA) are compositionally biased toward low complexity.

The protein belongs to the TRAFAC class myosin-kinesin ATPase superfamily. Myosin family. Post-translationally, phosphorylation of the TEDS site (Ser-358) is required for the polarization of the actin cytoskeleton. Phosphorylation probably activates the myosin-I ATPase activity.

The protein localises to the cytoplasm. It localises to the cytoskeleton. It is found in the actin patch. Functionally, type-I myosin implicated in the organization of the actin cytoskeleton. Required for proper actin cytoskeleton polarization. At the cell cortex, assembles in patch-like structures together with proteins from the actin-polymerizing machinery and promotes actin assembly. Functions as actin nucleation-promoting factor (NPF) for the Arp2/3 complex. This Yarrowia lipolytica (strain CLIB 122 / E 150) (Yeast) protein is Myosin-1 (MYO1).